The following is a 102-amino-acid chain: Large ribosomal subunit protein bL28 (102 aa).

Residues 1-20 (MSRRCELTAKGPQVGHKVSH) are disordered.

This sequence belongs to the bacterial ribosomal protein bL28 family.

In Bradyrhizobium sp. (strain ORS 278), this protein is Large ribosomal subunit protein bL28.